Here is a 271-residue protein sequence, read N- to C-terminus: MATTQQSGFAPAASPLASTIVQTPDDAIVAGFTSIPSQGDNMPAYHARPKQSDGPLPVVIVVQEIFGVHEHIRDICRRLALEGYLAIAPELYFREGDPNDFADIPTLLSGLVAKVPDSQVLADLDHVASWASRNGGDVHRLMITGFCWGGRITWLYAAHNPQLKAAVAWYGKLTGDKSLNSPKQPVDIATDLNAPVLGLYGGLDNSIPQESVETMRQALRAANAKAEIIVYPDAGHAFNADYRPSYHAASAEDGWQRMLEWFKQYGGKKSL.

Active-site residues include Cys147, Asp204, and His236.

This sequence belongs to the dienelactone hydrolase family.

It catalyses the reaction 2-(5-oxo-2,5-dihydrofuran-2-ylidene)acetate + H2O = 4-oxohex-2-enedioate + H(+). The chain is Putative carboxymethylenebutenolidase (ysgA) from Escherichia coli O157:H7.